Consider the following 686-residue polypeptide: Rhophilin-2 (686 aa).

Residues 26–100 (NPLAQTGRSK…LEGLNISVGV (75 aa)) enclose the REM-1 domain. The interval 46 to 66 (QILKAMRMRTGAENLLKAATN) is interaction with Rho. In terms of domain architecture, BRO1 spans 111 to 460 (PLIPLGLKET…QLKYTQLRED (350 aa)). The region spanning 515 to 593 (RSIHFTAEEG…DDIEMKVVSL (79 aa)) is the PDZ domain. A Phosphothreonine modification is found at threonine 655.

The protein belongs to the RHPN family. As to quaternary structure, interacts with GTP-bound RhoA and RhoB. Interacts with both GTP- and GDP-bound RhoA. Interacts with KRT18.

Its subcellular location is the cytoplasm. It localises to the perinuclear region. Its function is as follows. Binds specifically to GTP-Rho. May function in a Rho pathway to limit stress fiber formation and/or increase the turnover of F-actin structures in the absence of high levels of RhoA activity. The polypeptide is Rhophilin-2 (RHPN2) (Bos taurus (Bovine)).